We begin with the raw amino-acid sequence, 535 residues long: Probable fucosyltransferase 4 (535 aa).

Residues 1-20 (MYHIFQISGEVIKGLGLKTK) are Cytoplasmic-facing. Residues 21-41 (ILITIVFSTLLILSVMLLSFS) traverse the membrane as a helical; Signal-anchor for type II membrane protein segment. Residues 42 to 535 (NNFNNKLFAA…IWGLKLFDEL (494 aa)) lie on the Lumenal side of the membrane. 5 N-linked (GlcNAc...) asparagine glycosylation sites follow: N136, N226, N230, N377, and N409.

Belongs to the glycosyltransferase 37 family. In terms of tissue distribution, expressed in roots, stems, leaves, flowers, siliques and seedlings.

The protein resides in the golgi apparatus. It is found in the golgi stack membrane. Its pathway is protein modification; protein glycosylation. Functionally, may be involved in cell wall biosynthesis. May act as a fucosyltransferase. This Arabidopsis thaliana (Mouse-ear cress) protein is Probable fucosyltransferase 4 (FUT4).